The primary structure comprises 87 residues: Small ribosomal subunit protein uS19 (87 aa).

This sequence belongs to the universal ribosomal protein uS19 family.

Protein S19 forms a complex with S13 that binds strongly to the 16S ribosomal RNA. In Mesoplasma florum (strain ATCC 33453 / NBRC 100688 / NCTC 11704 / L1) (Acholeplasma florum), this protein is Small ribosomal subunit protein uS19.